The primary structure comprises 217 residues: Ras-related protein Rab11B (217 aa).

GTP is bound at residue 21–28 (GDSGVGKS). The Effector region motif lies at 43-51 (SKSTIGVEF). Residues 69–73 (DTAGQ) and 127–130 (NKAD) each bind GTP. Residues Cys-214 and Cys-215 are each lipidated (S-geranylgeranyl cysteine).

This sequence belongs to the small GTPase superfamily. Rab family.

Its subcellular location is the cell membrane. The sequence is that of Ras-related protein Rab11B (RAB11B) from Nicotiana tabacum (Common tobacco).